The chain runs to 431 residues: tRNA(Ile)-lysidine synthase (431 aa).

25 to 30 (SGGPDS) contributes to the ATP binding site.

The protein belongs to the tRNA(Ile)-lysidine synthase family.

It localises to the cytoplasm. It catalyses the reaction cytidine(34) in tRNA(Ile2) + L-lysine + ATP = lysidine(34) in tRNA(Ile2) + AMP + diphosphate + H(+). Functionally, ligates lysine onto the cytidine present at position 34 of the AUA codon-specific tRNA(Ile) that contains the anticodon CAU, in an ATP-dependent manner. Cytidine is converted to lysidine, thus changing the amino acid specificity of the tRNA from methionine to isoleucine. The chain is tRNA(Ile)-lysidine synthase from Lactobacillus johnsonii (strain CNCM I-12250 / La1 / NCC 533).